Reading from the N-terminus, the 76-residue chain is ATP synthase subunit 9, mitochondrial (76 aa).

Transmembrane regions (helical) follow at residues 11 to 31 (IGAG…GIVF) and 53 to 73 (ILGF…AFLI).

The protein belongs to the ATPase C chain family. As to quaternary structure, F-type ATPases have 2 components, CF(1) - the catalytic core - and CF(0) - the membrane proton channel. CF(1) has five subunits: alpha(3), beta(3), gamma(1), delta(1), epsilon(1). CF(0) has three main subunits: a, b and c.

It localises to the mitochondrion membrane. Its function is as follows. This protein is one of the chains of the nonenzymatic membrane component (F0) of mitochondrial ATPase. The polypeptide is ATP synthase subunit 9, mitochondrial (ATP9) (Chondrus crispus (Carrageen Irish moss)).